A 644-amino-acid chain; its full sequence is Phosphomethylpyrimidine synthase (644 aa).

Substrate is bound by residues N236, M265, Y294, H330, 350-352, 391-394, and E430; these read SRG and DGLR. Zn(2+) is bound at residue H434. Position 457 (Y457) interacts with substrate. H498 lines the Zn(2+) pocket. [4Fe-4S] cluster-binding residues include C578, C581, and C586.

Belongs to the ThiC family. In terms of assembly, homodimer. [4Fe-4S] cluster serves as cofactor.

The catalysed reaction is 5-amino-1-(5-phospho-beta-D-ribosyl)imidazole + S-adenosyl-L-methionine = 4-amino-2-methyl-5-(phosphooxymethyl)pyrimidine + CO + 5'-deoxyadenosine + formate + L-methionine + 3 H(+). Its pathway is cofactor biosynthesis; thiamine diphosphate biosynthesis. Functionally, catalyzes the synthesis of the hydroxymethylpyrimidine phosphate (HMP-P) moiety of thiamine from aminoimidazole ribotide (AIR) in a radical S-adenosyl-L-methionine (SAM)-dependent reaction. The chain is Phosphomethylpyrimidine synthase from Aliivibrio fischeri (strain ATCC 700601 / ES114) (Vibrio fischeri).